Reading from the N-terminus, the 874-residue chain is Leucine--tRNA ligase (874 aa).

The 'HIGH' region motif lies at 47–57 (PYPSGKLHMGH). Residues 636-640 (KMSKS) carry the 'KMSKS' region motif. K639 provides a ligand contact to ATP.

Belongs to the class-I aminoacyl-tRNA synthetase family.

It localises to the cytoplasm. The enzyme catalyses tRNA(Leu) + L-leucine + ATP = L-leucyl-tRNA(Leu) + AMP + diphosphate. This chain is Leucine--tRNA ligase, found in Acinetobacter baumannii (strain AB0057).